The chain runs to 71 residues: Ceratotoxin-D (71 aa).

A signal peptide spans 1-23; the sequence is MANLKAVFLICILAFIAFHCVVG. Positions 24–35 are excised as a propeptide; that stretch reads APTAEDSIVVKR.

Homomer of four to six subunits.

It localises to the secreted. Its function is as follows. Female-specific peptides with potent activity against Gram-positive and Gram-negative bacteria. They have as well hemolytic activity. The sequence is that of Ceratotoxin-D (CTXD) from Ceratitis capitata (Mediterranean fruit fly).